A 72-amino-acid chain; its full sequence is Translation initiation factor IF-1 (72 aa).

The 72-residue stretch at Met-1–Arg-72 folds into the S1-like domain.

The protein belongs to the IF-1 family. In terms of assembly, component of the 30S ribosomal translation pre-initiation complex which assembles on the 30S ribosome in the order IF-2 and IF-3, IF-1 and N-formylmethionyl-tRNA(fMet); mRNA recruitment can occur at any time during PIC assembly.

The protein resides in the cytoplasm. Functionally, one of the essential components for the initiation of protein synthesis. Stabilizes the binding of IF-2 and IF-3 on the 30S subunit to which N-formylmethionyl-tRNA(fMet) subsequently binds. Helps modulate mRNA selection, yielding the 30S pre-initiation complex (PIC). Upon addition of the 50S ribosomal subunit IF-1, IF-2 and IF-3 are released leaving the mature 70S translation initiation complex. This chain is Translation initiation factor IF-1, found in Buchnera aphidicola subsp. Schizaphis graminum (strain Sg).